We begin with the raw amino-acid sequence, 215 residues long: Thiamine-phosphate synthase (215 aa).

4-amino-2-methyl-5-(diphosphooxymethyl)pyrimidine contacts are provided by residues 42–46 (QYREK) and D77. Mg(2+)-binding residues include D78 and D97. Residue S116 participates in 4-amino-2-methyl-5-(diphosphooxymethyl)pyrimidine binding. 2-[(2R,5Z)-2-carboxy-4-methylthiazol-5(2H)-ylidene]ethyl phosphate is bound at residue 143–145 (TKS). K146 serves as a coordination point for 4-amino-2-methyl-5-(diphosphooxymethyl)pyrimidine. 2-[(2R,5Z)-2-carboxy-4-methylthiazol-5(2H)-ylidene]ethyl phosphate contacts are provided by residues G174 and 194-195 (IS).

The protein belongs to the thiamine-phosphate synthase family. Mg(2+) is required as a cofactor.

The enzyme catalyses 2-[(2R,5Z)-2-carboxy-4-methylthiazol-5(2H)-ylidene]ethyl phosphate + 4-amino-2-methyl-5-(diphosphooxymethyl)pyrimidine + 2 H(+) = thiamine phosphate + CO2 + diphosphate. The catalysed reaction is 2-(2-carboxy-4-methylthiazol-5-yl)ethyl phosphate + 4-amino-2-methyl-5-(diphosphooxymethyl)pyrimidine + 2 H(+) = thiamine phosphate + CO2 + diphosphate. It catalyses the reaction 4-methyl-5-(2-phosphooxyethyl)-thiazole + 4-amino-2-methyl-5-(diphosphooxymethyl)pyrimidine + H(+) = thiamine phosphate + diphosphate. The protein operates within cofactor biosynthesis; thiamine diphosphate biosynthesis; thiamine phosphate from 4-amino-2-methyl-5-diphosphomethylpyrimidine and 4-methyl-5-(2-phosphoethyl)-thiazole: step 1/1. Condenses 4-methyl-5-(beta-hydroxyethyl)thiazole monophosphate (THZ-P) and 2-methyl-4-amino-5-hydroxymethyl pyrimidine pyrophosphate (HMP-PP) to form thiamine monophosphate (TMP). The chain is Thiamine-phosphate synthase from Limosilactobacillus reuteri (strain DSM 20016) (Lactobacillus reuteri).